The primary structure comprises 440 residues: Probable circularly permuted 1,3-beta-glucanase (440 aa).

Residues 1–20 (MHYSLFFGAALAASVSTVSA) form the signal peptide. Over residues 100-112 (GEKPKRELKPSIH) the composition is skewed to basic and acidic residues. Disordered stretches follow at residues 100 to 126 (GEKPKRELKPSIHERRHGHSHQRFHEK) and 153 to 195 (PAAP…VAPG). The segment covering 113 to 125 (ERRHGHSHQRFHE) has biased composition (basic residues). Residues 153 to 164 (PAAPTSAPGAPG) show a composition bias toward low complexity. Over residues 177-186 (GGDKPKDPKP) the composition is skewed to basic and acidic residues. The ExDxxE motif motif lies at 350 to 355 (EFDVLE).

The protein belongs to the PGA52 family.

It localises to the secreted. It catalyses the reaction Hydrolysis of (1-&gt;3)-beta-D-glucosidic linkages in (1-&gt;3)-beta-D-glucans.. Functionally, probable circularly permuted 1,3-beta-glucanase involved in cell wall modification through beta-1,3-glucan network alterations such as increased branching or remodeling. The sequence is that of Probable circularly permuted 1,3-beta-glucanase from Arthroderma benhamiae (strain ATCC MYA-4681 / CBS 112371) (Trichophyton mentagrophytes).